We begin with the raw amino-acid sequence, 622 residues long: Microtubule-associated protein 70-1 (622 aa).

Positions 1 to 27 (MSDVSADGGFLSAEQATTPVAIPTPYP) are disordered. A coiled-coil region spans residues 66 to 365 (DPVKVELNRL…LAISDRAAKS (300 aa)). The tract at residues 250 to 483 (ILDRMHRQKV…YSFNKACDET (234 aa)) is required for targeting to microtubules. Disordered stretches follow at residues 388-512 (SSIS…TEDN) and 579-622 (AAMR…RSTQ). Polar residues-rich tracts occupy residues 400–425 (SMSNGPSRRQSIGGSDNLQKFASNGF) and 432–453 (MRNSFTSNSTSVLKNAKGTSKS). Basic and acidic residues-rich tracts occupy residues 479-501 (ACDETKESESPNTWKEDSEEKPP) and 579-591 (AAMRVDKDQDNRA). Positions 541–590 (DKDDAIEMLAKKVETLTKAMEVEAKKMRREVAAMEKEVAAMRVDKDQDNR) form a coiled coil. Over residues 594-605 (SSNTKPSSNTAQ) the composition is skewed to polar residues.

It belongs to the MAP70 family. As to quaternary structure, interacts with MAP70.5 and itself.

It is found in the cytoplasm. It localises to the cytoskeleton. The protein localises to the phragmoplast. Its subcellular location is the spindle. Functionally, plant-specific protein that interact with microtubules. In association with MAP70.5, is essential for the normal banding pattern of secondary cell wall and for the proper development of xylem tracheary elements and wood formation. This is Microtubule-associated protein 70-1 (MAP70.1) from Arabidopsis thaliana (Mouse-ear cress).